The primary structure comprises 564 residues: 5-aminolevulinate synthase, mitochondrial (564 aa).

The N-terminal 57 residues, 1–57 (MESITKVSMSVCPFVRSTSTQALRQLSQTSGALANQARQCPIAGNAIRAKEISIRSY), are a transit peptide targeting the mitochondrion. Residues Arg-113, Ser-226, and Lys-245 each contribute to the substrate site. Positions 278, 306, and 350 each coordinate pyridoxal 5'-phosphate. Residue Lys-353 is part of the active site. N6-(pyridoxal phosphate)lysine is present on Lys-353. Pyridoxal 5'-phosphate contacts are provided by Thr-382 and Thr-383. Thr-468 provides a ligand contact to substrate.

This sequence belongs to the class-II pyridoxal-phosphate-dependent aminotransferase family. In terms of assembly, homodimer. Pyridoxal 5'-phosphate is required as a cofactor.

It is found in the mitochondrion matrix. The enzyme catalyses succinyl-CoA + glycine + H(+) = 5-aminolevulinate + CO2 + CoA. It participates in porphyrin-containing compound metabolism; protoporphyrin-IX biosynthesis; 5-aminolevulinate from glycine: step 1/1. Catalyzes the synthesis of 5-aminolevulinate (ALA) from succinyl-CoA and glycine, the first and rate-limiting step in heme biosynthesis. The polypeptide is 5-aminolevulinate synthase, mitochondrial (HEM1) (Candida albicans (strain SC5314 / ATCC MYA-2876) (Yeast)).